We begin with the raw amino-acid sequence, 660 residues long: DNA mismatch repair protein MutL (660 aa).

Positions 414–433 (SSVKHASRPQNTFTETDHPN) are disordered.

Belongs to the DNA mismatch repair MutL/HexB family.

Its function is as follows. This protein is involved in the repair of mismatches in DNA. It is required for dam-dependent methyl-directed DNA mismatch repair. May act as a 'molecular matchmaker', a protein that promotes the formation of a stable complex between two or more DNA-binding proteins in an ATP-dependent manner without itself being part of a final effector complex. The chain is DNA mismatch repair protein MutL from Streptococcus pyogenes serotype M6 (strain ATCC BAA-946 / MGAS10394).